The sequence spans 292 residues: Insulin-like growth factor-binding protein 3 (292 aa).

Residues 1–27 form the signal peptide; that stretch reads MHPARPALWAAALTALTLLRGPPVARA. Residues 36–119 form the IGFBP N-terminal domain; the sequence is PVVRCEPCDA…LNGRGFCANA (84 aa). Intrachain disulfides connect cysteine 40–cysteine 69, cysteine 43–cysteine 71, cysteine 51–cysteine 72, cysteine 60–cysteine 75, cysteine 83–cysteine 96, and cysteine 90–cysteine 116. 3 N-linked (GlcNAc...) asparagine glycosylation sites follow: asparagine 118, asparagine 124, and asparagine 137. 2 disordered regions span residues 127–161 and 191–211; these read AYLP…THRV and YESQ…ETEY. Residues 129 to 139 are compositionally biased toward polar residues; the sequence is LPSQPSPGNTT. A Phosphoserine modification is found at serine 149. Positions 192–203 are enriched in polar residues; the sequence is ESQSTDTQNFSS. Asparagine 200 is a glycosylation site (N-linked (GlcNAc...) asparagine). Position 202 is a phosphoserine (serine 202). The 76-residue stretch at 211–286 folds into the Thyroglobulin type-1 domain; that stretch reads YGPCRREMED…DTKGKDDVHC (76 aa). Intrachain disulfides connect cysteine 214/cysteine 241, cysteine 252/cysteine 263, and cysteine 265/cysteine 286.

As to quaternary structure, interacts with XLKD1. Binds IGF2 more than IGF1. Forms a ternary complex of about 140 to 150 kDa with IGF1 or IGF2 and a 85 kDa glycoprotein (ALS). Interacts with humanin; humanin competes with importin KPNB1 for binding to IGFBP3, blocking IGFBP3 nuclear import and IGFBP3-mediated apoptosis. Interacts with TMEM219. Interacts with RXRA; this interaction modulates the transcriptional activity of RXRA. Interacts with LRP1; this interaction mediates cell growth inhibition independent of IGF1. In terms of processing, phosphorylated by FAM20C in the extracellular medium. Phosphorylated by CK2; resulting in decreased nuclear localization.

The protein resides in the secreted. It is found in the nucleus. Multifunctional protein that plays a critical role in regulating the availability of IGFs such as IGF1 and IGF2 to their receptors and thereby regulates IGF-mediated cellular processes including proliferation, differentiation, and apoptosis in a cell-type specific manner. Also exhibits IGF-independent antiproliferative and apoptotic effects mediated by its receptor TMEM219/IGFBP-3R. Inhibits the positive effect of humanin on insulin sensitivity. Promotes testicular germ cell apoptosis. Acts via LRP-1/alpha2M receptor, also known as TGF-beta type V receptor, to mediate cell growth inhibition independent of IGF1. Mechanistically, induces serine-specific dephosphorylation of IRS1 or IRS2 upon ligation to its receptor, leading to the inhibitory cascade. In the nucleus, interacts with transcription factors such as retinoid X receptor-alpha/RXRA to regulate transcriptional signaling and apoptosis. The sequence is that of Insulin-like growth factor-binding protein 3 (Igfbp3) from Rattus norvegicus (Rat).